A 472-amino-acid polypeptide reads, in one-letter code: MSPEEWTYLVVLLISIPIGFLFKKAGPGLKRWGAAAVGLGLTLFTCGPHTLHSLVTILGTWALIQAQPCSCHALALAWTFSYLLFFRALSLLGLPTPTPFTNAVQLLLTLKLVSLASEVQDLHLAQRKEMASGFSKGPTLGLLPDVPSLMETLSYSYCYVGIMTGPFFRYRTYLDWLEQPFPGAVPSLRPLLRRAWPAPLFGLLFLLSSHLFPLEAVREDAFYARPLPARLFYMIPVFFAFRMRFYVAWIAAECGCIAAGFGAYPVAAKARAGGGPTLQCPPPSSPEKAASLEYDYETIRNIDCYSTDFCVRVRDGMRYWNMTVQWWLAQYIYKSAPARSYVLRSAWTMLLSAYWHGLHPGYYLSFLTIPLCLAAEGRLESALRGRLSPGGQKAWDWVHWFLKMRAYDYMCMGFVLLSLADTLRYWASIYFCIHFLALAALGLGLALGGGSPSRRKAASQPTSLAPEKLREE.

The Cytoplasmic portion of the chain corresponds to M1–E5. A helical transmembrane segment spans residues W6–F22. Residues K23–G33 are Lumenal-facing. Residues A34 to I57 traverse the membrane as a helical segment. The Cytoplasmic segment spans residues L58–A73. The chain crosses the membrane as a helical span at residues L74 to G93. The Lumenal portion of the chain corresponds to L94–R194. The helical transmembrane segment at A195–F212 threads the bilayer. The Cytoplasmic segment spans residues P213–L231. A helical membrane pass occupies residues F232 to F261. Over G262 to W426 the chain is Lumenal. N321 carries N-linked (GlcNAc...) asparagine glycosylation. Residues A427 to L447 traverse the membrane as a helical segment. Topologically, residues G448 to E472 are cytoplasmic. Residues S453–E472 are disordered.

Belongs to the membrane-bound acyltransferase family. Interacts with SPTSSA; the interaction facilitates MBOAT7 location to mitochondria-associated membranes (MAMs). As to expression, overexpressed in metastatic breast and bladder carcinomas relative to normal breast epithelium and urothelium.

It is found in the endoplasmic reticulum membrane. It catalyses the reaction a 1-acyl-sn-glycero-3-phospho-(1D-myo-inositol) + (5Z,8Z,11Z,14Z)-eicosatetraenoyl-CoA = a 1-acyl-2-(5Z,8Z,11Z,14Z-eicosatetraenoyl)-sn-glycero-3-phospho-(1D-myo-inositol) + CoA. The enzyme catalyses (5Z,8Z,11Z,14Z)-eicosatetraenoyl-CoA + 1-hexadecanoyl-sn-glycero-3-phosphocholine = 1-hexadecanoyl-2-(5Z,8Z,11Z,14Z-eicosatetraenoyl)-sn-glycero-3-phosphocholine + CoA. The catalysed reaction is a 1-acyl-sn-glycero-3-phospho-(1D-myo-inositol) + an acyl-CoA = a 1,2-diacyl-sn-glycero-3-phospho-(1D-myo-inositol) + CoA. It carries out the reaction 1-octadecanoyl-sn-glycero-3-phospho-(1D-myo-inositol) + (5Z,8Z,11Z,14Z)-eicosatetraenoyl-CoA = 1-octadecanoyl-2-(5Z,8Z,11Z,14Z-eicosatetraenoyl)-sn-glycero-3-phospho-(1D-myo-inositol) + CoA. The protein operates within lipid metabolism; phospholipid metabolism. With respect to regulation, activity is inhibited by thimerosal. Its function is as follows. Acyltransferase which catalyzes the transfer of an acyl group from an acyl-CoA to a lysophosphatidylinositol (1-acylglycerophosphatidylinositol or LPI) leading to the production of a phosphatidylinositol (1,2-diacyl-sn-glycero-3-phosphoinositol or PI) and participates in the reacylation step of the phospholipid remodeling pathway also known as the Lands cycle. Prefers arachidonoyl-CoA as the acyl donor, thus contributing to the regulation of free levels arachidonic acid in cell. In liver, participates in the regulation of triglyceride metabolism through the phosphatidylinositol acyl-chain remodeling regulation. In Homo sapiens (Human), this protein is Membrane-bound acylglycerophosphatidylinositol O-acyltransferase MBOAT7.